Consider the following 219-residue polypeptide: Nodulation protein NolA (219 aa).

The HTH merR-type domain occupies 10–79; that stretch reads RWRIGELAEA…LHEIRKAMEG (70 aa). Positions 13 to 32 form a DNA-binding region, H-T-H motif; the sequence is IGELAEATGVTVRTLHHYEH.

Functionally, involved in genotype-specific nodulation of soybeans. The sequence is that of Nodulation protein NolA (nolA) from Bradyrhizobium elkanii.